Reading from the N-terminus, the 242-residue chain is Ubiquinone biosynthesis O-methyltransferase (242 aa).

4 residues coordinate S-adenosyl-L-methionine: Arg44, Gly64, Asp85, and Met129.

Belongs to the methyltransferase superfamily. UbiG/COQ3 family.

The enzyme catalyses a 3-demethylubiquinol + S-adenosyl-L-methionine = a ubiquinol + S-adenosyl-L-homocysteine + H(+). It catalyses the reaction a 3-(all-trans-polyprenyl)benzene-1,2-diol + S-adenosyl-L-methionine = a 2-methoxy-6-(all-trans-polyprenyl)phenol + S-adenosyl-L-homocysteine + H(+). It functions in the pathway cofactor biosynthesis; ubiquinone biosynthesis. O-methyltransferase that catalyzes the 2 O-methylation steps in the ubiquinone biosynthetic pathway. In Salmonella paratyphi A (strain ATCC 9150 / SARB42), this protein is Ubiquinone biosynthesis O-methyltransferase.